A 145-amino-acid polypeptide reads, in one-letter code: Basic phospholipase A2 cPt09 (145 aa).

The signal sequence occupies residues 1 to 21 (MYPAHLLVLLAVCVSLLGAST). Positions 22 to 27 (IPPLPL) are excised as a propeptide. Disulfide bonds link Cys-38-Cys-98, Cys-54-Cys-144, Cys-56-Cys-72, Cys-71-Cys-125, Cys-78-Cys-118, Cys-87-Cys-111, and Cys-105-Cys-116. Tyr-55, Gly-57, and Gly-59 together coordinate Ca(2+). His-75 is an active-site residue. Residue Asp-76 coordinates Ca(2+). Asp-119 is an active-site residue.

Belongs to the phospholipase A2 family. Group I subfamily. D49 sub-subfamily. Requires Ca(2+) as cofactor. Expressed by the venom gland.

The protein localises to the secreted. It catalyses the reaction a 1,2-diacyl-sn-glycero-3-phosphocholine + H2O = a 1-acyl-sn-glycero-3-phosphocholine + a fatty acid + H(+). PLA2 catalyzes the calcium-dependent hydrolysis of the 2-acyl groups in 3-sn-phosphoglycerides. This chain is Basic phospholipase A2 cPt09, found in Laticauda semifasciata (Black-banded sea krait).